The sequence spans 261 residues: Syntaxin-7 (261 aa).

Ser-2 is modified (N-acetylserine). Over 2-238 (SYTPGIGGDS…DYQRKSRKTL (237 aa)) the chain is Cytoplasmic. Thr-4 bears the Phosphothreonine mark. At Ser-45 the chain carries Phosphoserine. Positions 47–68 (ELRQLLQQKQQYTNQLAKETDK) form a coiled coil. The residue at position 75 (Ser-75) is a Phosphoserine. A Phosphothreonine modification is found at Thr-79. Phosphoserine is present on residues Ser-125, Ser-126, Ser-129, and Ser-205. Positions 128–148 (VSGGFPEDSSKEKNLVSWESQ) are disordered. The t-SNARE coiled-coil homology domain occupies 165 to 227 (LRLIHERESS…QQANQQLSRA (63 aa)). Residues 239–259 (CIIIFILVVRIVIICLIVWGL) form a helical; Anchor for type IV membrane protein membrane-spanning segment. Residues 260–261 (KG) are Vesicular-facing.

Belongs to the syntaxin family. Interacts with VPS11, VPS16 and VPS18. Interacts with VPS33A. Forms a SNARE complex with VTI1B, STX8 and VAMP8 which functions in the homotypic fusion of late endosomes. Component of the SNARE complex composed of STX7, STX8, VAMP7 and VTI1B that is required for heterotypic fusion of late endosomes with lysosomes. Interacts with TPC1.

The protein resides in the early endosome membrane. May be involved in protein trafficking from the plasma membrane to the early endosome (EE) as well as in homotypic fusion of endocytic organelles. Mediates the endocytic trafficking from early endosomes to late endosomes and lysosomes. In Mus musculus (Mouse), this protein is Syntaxin-7 (Stx7).